The following is a 756-amino-acid chain: Anaphase-promoting complex subunit 5 (756 aa).

TPR repeat units follow at residues R301–S334, D522–N555, I581–Y614, and Y678–R711.

It belongs to the APC5 family. In terms of assembly, the APC/C is composed of at least 12 subunits.

Its subcellular location is the nucleus. It localises to the cytoplasm. The protein localises to the cytoskeleton. The protein resides in the spindle. The protein operates within protein modification; protein ubiquitination. Its function is as follows. Component of the anaphase promoting complex/cyclosome (APC/C), a cell cycle-regulated E3 ubiquitin ligase that controls progression through mitosis and the G1 phase of the cell cycle. The APC/C complex acts by mediating ubiquitination and subsequent degradation of target proteins: it mainly mediates the formation of 'Lys-11'-linked polyubiquitin chains and, to a lower extent, the formation of 'Lys-48'- and 'Lys-63'-linked polyubiquitin chains. The APC/C complex catalyzes assembly of branched 'Lys-11'-/'Lys-48'-linked branched ubiquitin chains on target proteins. The chain is Anaphase-promoting complex subunit 5 (ANAPC5) from Gallus gallus (Chicken).